A 370-amino-acid chain; its full sequence is Quinolinate synthase (370 aa).

Residues His62 and Ser83 each coordinate iminosuccinate. Residue Cys128 coordinates [4Fe-4S] cluster. Iminosuccinate is bound by residues 154-156 (YAN) and Ser171. Residue Cys215 participates in [4Fe-4S] cluster binding. Residues 241–243 (HPE) and Thr258 contribute to the iminosuccinate site. Cys312 provides a ligand contact to [4Fe-4S] cluster.

This sequence belongs to the quinolinate synthase family. Type 1 subfamily. It depends on [4Fe-4S] cluster as a cofactor.

The protein localises to the cytoplasm. The enzyme catalyses iminosuccinate + dihydroxyacetone phosphate = quinolinate + phosphate + 2 H2O + H(+). The protein operates within cofactor biosynthesis; NAD(+) biosynthesis; quinolinate from iminoaspartate: step 1/1. Catalyzes the condensation of iminoaspartate with dihydroxyacetone phosphate to form quinolinate. The protein is Quinolinate synthase of Neisseria gonorrhoeae (strain ATCC 700825 / FA 1090).